A 99-amino-acid polypeptide reads, in one-letter code: METNNHFFYVVKCKDNSWYAGYTNDLHKRVKTHNDGKGAKYTKVRRPVELIFAESFSTKREAMQAEYYFKKLTRKKKELYIEEKRNSKEAVYVKAPNEL.

A GIY-YIG domain is found at 4–79; sequence NNHFFYVVKC…KKLTRKKKEL (76 aa).

This sequence belongs to the UPF0213 family.

This Bacillus subtilis (strain 168) protein is UPF0213 protein YazA (yazA).